The sequence spans 435 residues: MKIFSPIRLVLAIAALMSVFSAPAFARVEININKGNVEPLPIAITDFMSSDGIGAQVSAVIAADLQRSGLFAPVNKNAFIEKISNPDQQPRFEDWKVINAQALVTGRVTRESDGRLRAEFRLWDTFAGQQLSGQQFFTQPENWRRVAHIIADAIYERVTGEKGYFDTRVVFVSESGPKTARKRQLSIMDQDGFNVRNLTNSNDIVLTPRFSPNRQEVTYMSFEGQQPRVYLLQLETGQREVVGNFPGMTFSPRFSPDGQKVIMSLQQDGNANIYTMDLRSRTTTRLTNTAAIDTAPSYSPDGQRVAFESDRGGRQQIYVMNADGSGQQRVSFGDGSYSTPVWSPRGDLIAFTKQSGGKFSIGVMKTDGSGERILTSGFHNEGPTWAPNGRVLMFFRQNAGAGGPQLYSIDLTGYNEQLIKTPTFASDPAWSPLLD.

The first 26 residues, 1-26, serve as a signal peptide directing secretion; it reads MKIFSPIRLVLAIAALMSVFSAPAFA.

This sequence belongs to the TolB family. The Tol-Pal system is composed of five core proteins: the inner membrane proteins TolA, TolQ and TolR, the periplasmic protein TolB and the outer membrane protein Pal. They form a network linking the inner and outer membranes and the peptidoglycan layer.

It is found in the periplasm. In terms of biological role, part of the Tol-Pal system, which plays a role in outer membrane invagination during cell division and is important for maintaining outer membrane integrity. This Agrobacterium fabrum (strain C58 / ATCC 33970) (Agrobacterium tumefaciens (strain C58)) protein is Tol-Pal system protein TolB.